Here is a 279-residue protein sequence, read N- to C-terminus: MKNLIILTGLSGAGKSTALGLLEDMGFYCIDNLPINLVETILPVISMNVDNIAFVLDARSENFERIDEILNNLKKKYASNLKVIFLTAKDAIIINRFAHTRRNHPLLKRVNSLEKAIQLEREILTKALEFSDIVIDTSNLNPHQLREKLVEILGSVKKKFLVRILSFGFKYGLPLDVDFIFDVRFFPNPFYIKDLREKSGRDEKVKEFLYNTQGVKEYIEMIKNVVDFALKRYENEGRMELSIGIGCTGGQHRSVFFAEELASIYRQRYEVLLEHRDVK.

9–16 (GLSGAGKS) contacts ATP. GTP is bound at residue 57–60 (DARS).

It belongs to the RapZ-like family.

Its function is as follows. Displays ATPase and GTPase activities. The chain is Nucleotide-binding protein THA_1518 from Thermosipho africanus (strain TCF52B).